The chain runs to 230 residues: MGKECRDIVELKEKLGIYVDDKLLLQAVTHTSYAHEQKDVVDHNERLEFLGDAVLELAISETLYKKYPELPEGELTKLRAELVCELSLVKIAEKLDLGKYLRLGKGEDSTGGRDRRSTLADTVEALIGAVYLQTNYDQTKQLILDLFKDQLSHIDNQRIGDYKTMIQELVQDRYGDPPKYQIVKESGPDHDKSFVAEVQINNEVVGRGSGKSKKEAEQNAAHFAFQKLSK.

An RNase III domain is found at 8–135 (IVELKEKLGI…LIGAVYLQTN (128 aa)). Glu-48 contacts Mg(2+). Asp-52 is a catalytic residue. Mg(2+) contacts are provided by Asp-121 and Glu-124. Residue Glu-124 is part of the active site. Positions 161–230 (DYKTMIQELV…AHFAFQKLSK (70 aa)) constitute a DRBM domain.

Belongs to the ribonuclease III family. In terms of assembly, homodimer. Mg(2+) serves as cofactor.

It is found in the cytoplasm. It carries out the reaction Endonucleolytic cleavage to 5'-phosphomonoester.. In terms of biological role, digests double-stranded RNA. Involved in the processing of primary rRNA transcript to yield the immediate precursors to the large and small rRNAs (23S and 16S). Processes some mRNAs, and tRNAs when they are encoded in the rRNA operon. Processes pre-crRNA and tracrRNA of type II CRISPR loci if present in the organism. The chain is Ribonuclease 3 from Natranaerobius thermophilus (strain ATCC BAA-1301 / DSM 18059 / JW/NM-WN-LF).